A 182-amino-acid polypeptide reads, in one-letter code: Alkyl hydroperoxide reductase AhpD (182 aa).

The active-site Proton donor is the Cys-132. The cysteines at positions 132 and 135 are disulfide-linked. Cys-135 functions as the Cysteine sulfenic acid (-SOH) intermediate in the catalytic mechanism.

The protein belongs to the AhpD family.

It carries out the reaction N(6)-[(R)-dihydrolipoyl]-L-lysyl-[lipoyl-carrier protein] + a hydroperoxide = N(6)-[(R)-lipoyl]-L-lysyl-[lipoyl-carrier protein] + an alcohol + H2O. In terms of biological role, antioxidant protein with alkyl hydroperoxidase activity. Required for the reduction of the AhpC active site cysteine residues and for the regeneration of the AhpC enzyme activity. The polypeptide is Alkyl hydroperoxide reductase AhpD (Bradyrhizobium diazoefficiens (strain JCM 10833 / BCRC 13528 / IAM 13628 / NBRC 14792 / USDA 110)).